A 418-amino-acid chain; its full sequence is CinA-like protein (418 aa).

It belongs to the CinA family.

This chain is CinA-like protein, found in Cyanothece sp. (strain PCC 7425 / ATCC 29141).